The chain runs to 77 residues: DNA-directed RNA polymerase subunit omega (77 aa).

Belongs to the RNA polymerase subunit omega family. In terms of assembly, the RNAP catalytic core consists of 2 alpha, 1 beta, 1 beta' and 1 omega subunit. When a sigma factor is associated with the core the holoenzyme is formed, which can initiate transcription.

The enzyme catalyses RNA(n) + a ribonucleoside 5'-triphosphate = RNA(n+1) + diphosphate. Its function is as follows. Promotes RNA polymerase assembly. Latches the N- and C-terminal regions of the beta' subunit thereby facilitating its interaction with the beta and alpha subunits. This chain is DNA-directed RNA polymerase subunit omega, found in Dichelobacter nodosus (strain VCS1703A).